The following is a 422-amino-acid chain: Histidine--tRNA ligase (422 aa).

It belongs to the class-II aminoacyl-tRNA synthetase family. As to quaternary structure, homodimer.

The protein localises to the cytoplasm. The catalysed reaction is tRNA(His) + L-histidine + ATP = L-histidyl-tRNA(His) + AMP + diphosphate + H(+). In Vibrio cholerae serotype O1 (strain ATCC 39541 / Classical Ogawa 395 / O395), this protein is Histidine--tRNA ligase.